We begin with the raw amino-acid sequence, 380 residues long: Putative 8-amino-7-oxononanoate synthase (380 aa).

A substrate-binding site is contributed by Arg18. 106–107 is a pyridoxal 5'-phosphate binding site; the sequence is GY. Residue His131 coordinates substrate. Pyridoxal 5'-phosphate is bound by residues Ser179, 205–208, and 236–239; these read DEAH and TFGK. At Lys239 the chain carries N6-(pyridoxal phosphate)lysine. Position 352 (Thr352) interacts with substrate.

The protein belongs to the class-II pyridoxal-phosphate-dependent aminotransferase family. BioF subfamily. As to quaternary structure, homodimer. Pyridoxal 5'-phosphate is required as a cofactor.

It carries out the reaction 6-carboxyhexanoyl-[ACP] + L-alanine + H(+) = (8S)-8-amino-7-oxononanoate + holo-[ACP] + CO2. The protein operates within cofactor biosynthesis; biotin biosynthesis. Functionally, catalyzes the decarboxylative condensation of pimeloyl-[acyl-carrier protein] and L-alanine to produce 8-amino-7-oxononanoate (AON), [acyl-carrier protein], and carbon dioxide. This chain is Putative 8-amino-7-oxononanoate synthase (bioF), found in Neisseria meningitidis serogroup C / serotype 2a (strain ATCC 700532 / DSM 15464 / FAM18).